We begin with the raw amino-acid sequence, 1829 residues long: MILDTDYITKDGKPIIRIFKKENGEFKIELDPHFQPYIYALLKDDSAIDEIKAIKGERHGKIVRVVDAVKVKKKFLGRDVEVWKLIFEHPQDVPALRGKIREHPAVIDIYEYDIPFAKRYLIDKGLIPMEGDEELKLMAFDIETFYHEGDEFGKGEIIMISYADEEEARVITWKNIDLPYVDVVSNEREMIKRFVQIVREKDPDVLITYNGDNFDLPYLIKRAEKLGVTLLLGRDKEHPEPKIHRMGDSFAVEIKGRIHFDLFPVVRRTINLPTYTLEAVYEAVLGKTKSKLGAEEIAAIWETEESMKKLAQYSMEDARATYELGKEFFPMEAELAKLIGQSVWDVSRSSTGNLVEWYLLRVAYERNELAPNKPDEEEYRRRLRTTYLGGYVKEPERGLWENIAYLDFRCHPADTKVIVKGKGIVNISDVKEGDYILGIDGWQRVKKVWKYHYEGKLININGLKCTPNHKVPVVTENDRQTRIRDSLAKSFLSGKVKGKIITTKLFEKIAEFEKNKPSEEEILKGELSGIILAEGTLLRKDIEYFDSSRGKKRISHQYRVEITIGENEKELLERILYIFDKLFGIRPSVKKKGDTNALKITTAKKAVYLQIEELLKNIESLYAPAVLRGFFERDATVNKIRSTIVVTQGTNNKWKIDIVAKLLDSLGIPYSRYEYKYIENGKELTKHILEITGRDGLILFQTLVGFISSEKNEALEKAIEVREMNRLKNNSFYNLSTFEVSSEYYKGEVYDLTLEGNPYYFANGILTHNSLYPSIIVTHNVSPDTLEREGCKNYDVAPIVGYKFCKDFPGFIPSILGELITMRQEIKKKMKATIDPIEKKMLDYRQRAVKLLANSILPNEWLPIIENGEVKFVKIGEFIDRYMEEQKDKVRTVDNTEVLEVDNIFAFSLNKESKKSEIKKVKALIRHKYKGEAYEVELNSGRKIHITRGHSLFTIRNGKIKEIWGEEVKVGDLIIVPKKVKLNEKEAVINIPELISKLPDEDTADVVMTTPVKGRKNFFKGMLRTLKWIFGEESKRIRTFNRYLFHLEELGFVKLLPRGYEVTDWEGLKRYRQLYEKLVKNLRYNGNKREYLVRFNDIKDSVSCFPRKELEEWKIGTXKGFRXKCILKVDEDFGKFLGYYVSEGYAGAQKNKTGGMSYSVKLYNENPNVLKDMKNIAEKFFGKVRVGKNCVDIPKKMAYLLAKSLCGVTAENKRIPSIIFDSSEPVRWAFLRAYFVGDGDIHPSKRLRLSTKSELLANQLVFLLNSLGVSSIKIGFDSGVYRVYINEDLPFLQTSRQKNTYYPNLIPKEVLEEIFGRKFQKNITFEKFKELADSGKLDKRKVKLLDFLLNGDIVLDRVKNVEKREYEGYVYDLSVEDNENFLVGFGLLYAHNSYYGYMGYPKARWYSKECAESVTAWGRHYIEMTIKEIEEKFGFKVLYADSVTGDTEIIVKRNGRIEFVPIEKLFERVDYRIGEKEYCILEDVEALTLDNRGKLIWKKVPYVMRHRAKKKVYRIWITNSWYIDVTEDHSLIVAEDGLKEARPMEIEGKSLIATKDDLSGVEYIKPHAIEEISYNGYVYDIEVEGTHRFFANGILVHNTDGFYATIPGEKPETIKKKAKEFLKYINSKLPGLLELEYEGFYLRGFFVAKKRYAVIDEEGRITTRGLEVVRRDWSEIAKETQAKVLEAILKEDSVEKAVEIVKDVVEEIAKYQVPLEKLVIHEQITKDLSEYKAIGPHVAIAKRLAAKGIKVRPGTIISYIVLRGSGKISDRVILLSEYDPKKHKYDPDYYIENQVLPAVLRILEAFGYRKEDLKYQSSKQVGLDAWLKK.

2 consecutive DOD-type homing endonuclease domains span residues 527–668 (LSGI…SLGI) and 1136–1269 (FLGY…SLGV).

It belongs to the DNA polymerase type-B family. In terms of processing, this protein undergoes a protein self splicing that involves a post-translational excision of the three intervening regions (inteins) followed by peptide ligation.

It catalyses the reaction DNA(n) + a 2'-deoxyribonucleoside 5'-triphosphate = DNA(n+1) + diphosphate. The chain is DNA polymerase (pol) from Thermococcus aggregans.